Consider the following 197-residue polypeptide: dTTP/UTP pyrophosphatase (197 aa).

Asp-70 acts as the Proton acceptor in catalysis.

The protein belongs to the Maf family. YhdE subfamily. A divalent metal cation is required as a cofactor.

It localises to the cytoplasm. It carries out the reaction dTTP + H2O = dTMP + diphosphate + H(+). The catalysed reaction is UTP + H2O = UMP + diphosphate + H(+). Nucleoside triphosphate pyrophosphatase that hydrolyzes dTTP and UTP. May have a dual role in cell division arrest and in preventing the incorporation of modified nucleotides into cellular nucleic acids. The chain is dTTP/UTP pyrophosphatase from Methanosarcina barkeri (strain Fusaro / DSM 804).